The chain runs to 439 residues: 23S rRNA (uracil(1939)-C(5))-methyltransferase RlmD (439 aa).

One can recognise a TRAM domain in the interval 5-63 (RKLEHKTYKLNIESFSHEGRGIAHFEDKIIFVSDALPGELVIANRTFSCAKFEEADAKE). The [4Fe-4S] cluster site is built by cysteine 76, cysteine 82, cysteine 85, and cysteine 164. S-adenosyl-L-methionine contacts are provided by glutamine 271, phenylalanine 300, asparagine 305, glutamate 321, aspartate 348, and aspartate 370. The active-site Nucleophile is the cysteine 396.

It belongs to the class I-like SAM-binding methyltransferase superfamily. RNA M5U methyltransferase family. RlmD subfamily.

The enzyme catalyses uridine(1939) in 23S rRNA + S-adenosyl-L-methionine = 5-methyluridine(1939) in 23S rRNA + S-adenosyl-L-homocysteine + H(+). Functionally, catalyzes the formation of 5-methyl-uridine at position 1939 (m5U1939) in 23S rRNA. This chain is 23S rRNA (uracil(1939)-C(5))-methyltransferase RlmD, found in Vesicomyosocius okutanii subsp. Calyptogena okutanii (strain HA).